We begin with the raw amino-acid sequence, 106 residues long: Cytochrome c3 (106 aa).

Residues His-26, His-29, Cys-34, Cys-37, His-38, His-39, Cys-50, Cys-55, His-56, His-75, Cys-82, Cys-85, His-86, Cys-98, Cys-101, and His-102 each contribute to the heme c site.

In terms of processing, binds 4 heme c groups per subunit.

Its function is as follows. Participates in sulfate respiration coupled with phosphorylation by transferring electrons from the enzyme dehydrogenase to ferredoxin. This is Cytochrome c3 from Maridesulfovibrio salexigens (Desulfovibrio salexigens).